Reading from the N-terminus, the 143-residue chain is Midkine (143 aa).

Positions 1 to 20 are cleaved as a signal peptide; it reads MQHRGFLLLTLLALLALTSA. 5 cysteine pairs are disulfide-bonded: Cys37–Cys61, Cys45–Cys70, Cys52–Cys74, Cys84–Cys116, and Cys94–Cys126.

This sequence belongs to the pleiotrophin family. As to quaternary structure, homodimer. Interacts with ALK. Interacts with LRP1; promotes neuronal survival. Interacts with LRP2. Interacts with NCAM1. Interacts (via C-terminal) with PTPRZ1 (via chondroitin sulfate chains); this interaction is inhibited by PTN; this interaction promotes neuronal migration. Interacts with NCL; this interaction promotes NCL clustering and lateral movements of this complex into lipid rafts leading to MDK internalization. Interacts with LRP6 and LRP8: this interaction is calcium dependent. Interacts with ITGA4. Interacts with ITGA6. Interacts with ITGB1. Interacts with ITGA4:ITGB1 complex; this interaction mediates MDK-induced osteoblast cells migration through PXN phosphorylation. Interacts with ITGA6:ITGB1 complex; this interaction mediates MDK-induced neurite outgrowth. Interacts with NOTCH2; this interaction mediates a nuclear accumulation of NOTCH2 and therefore activation of NOTCH2 signaling leading to interaction between HES1 and STAT3. Interacts with GPC2 (via heparan sulfate chain); this interaction is inhibited by heparin followed by chondroitin sulfate E; this interaction induces GPC2 clustering through heparan sulfate chain; this interaction induces neuronal cell adhesion and neurite outgrowth. Interacts with SDC3; this interaction induces SDC3 clustering; this interaction induces neuronal cell adhesion and neurite outgrowth. Interacts with SDC1. Interacts with CSPG5; this interaction promotes elongation of oligodendroglial precursor-like cells. In terms of tissue distribution, expressed in various tumor cell lines. In insulinoma tissue predominantly expressed in precancerous lesions.

It is found in the secreted. In terms of biological role, secreted protein that functions as a cytokine and growth factor and mediates its signal through cell-surface proteoglycan and non-proteoglycan receptors. Binds cell-surface proteoglycan receptors via their chondroitin sulfate (CS) groups. Thereby regulates many processes like inflammatory response, cell proliferation, cell adhesion, cell growth, cell survival, tissue regeneration, cell differentiation and cell migration. Participates in inflammatory processes by exerting two different activities. Firstly, mediates neutrophils and macrophages recruitment to the sites of inflammation both by direct action by cooperating namely with ITGB2 via LRP1 and by inducing chemokine expression. This inflammation can be accompanied by epithelial cell survival and smooth muscle cell migration after renal and vessel damage, respectively. Secondly, suppresses the development of tolerogenic dendric cells thereby inhibiting the differentiation of regulatory T cells and also promote T cell expansion through NFAT signaling and Th1 cell differentiation. Promotes tissue regeneration after injury or trauma. After heart damage negatively regulates the recruitment of inflammatory cells and mediates cell survival through activation of anti-apoptotic signaling pathways via MAPKs and AKT pathways through the activation of angiogenesis. Also facilitates liver regeneration as well as bone repair by recruiting macrophage at trauma site and by promoting cartilage development by facilitating chondrocyte differentiation. Plays a role in brain by promoting neural precursor cells survival and growth through interaction with heparan sulfate proteoglycans. Binds PTPRZ1 and promotes neuronal migration and embryonic neurons survival. Binds SDC3 or GPC2 and mediates neurite outgrowth and cell adhesion. Binds chondroitin sulfate E and heparin leading to inhibition of neuronal cell adhesion induced by binding with GPC2. Binds CSPG5 and promotes elongation of oligodendroglial precursor-like cells. Also binds ITGA6:ITGB1 complex; this interaction mediates MDK-induced neurite outgrowth. Binds LRP1; promotes neuronal survival. Binds ITGA4:ITGB1 complex; this interaction mediates MDK-induced osteoblast cells migration through PXN phosphorylation. Binds anaplastic lymphoma kinase (ALK) which induces ALK activation and subsequent phosphorylation of the insulin receptor substrate (IRS1), followed by the activation of mitogen-activated protein kinase (MAPK) and PI3-kinase, and the induction of cell proliferation. Promotes epithelial to mesenchymal transition through interaction with NOTCH2. During arteriogenesis, plays a role in vascular endothelial cell proliferation by inducing VEGFA expression and release which in turn induces nitric oxide synthase expression. Moreover activates vasodilation through nitric oxide synthase activation. Negatively regulates bone formation in response to mechanical load by inhibiting Wnt/beta-catenin signaling in osteoblasts. In addition plays a role in hippocampal development, working memory, auditory response, early fetal adrenal gland development and the female reproductive system. The polypeptide is Midkine (Homo sapiens (Human)).